We begin with the raw amino-acid sequence, 81 residues long: Small ribosomal subunit protein bS16 (81 aa).

It belongs to the bacterial ribosomal protein bS16 family.

The sequence is that of Small ribosomal subunit protein bS16 from Coprothermobacter proteolyticus (strain ATCC 35245 / DSM 5265 / OCM 4 / BT).